The sequence spans 334 residues: Glycerol-3-phosphate dehydrogenase [NAD(P)+] (334 aa).

Residues tryptophan 13, arginine 33, and lysine 106 each coordinate NADPH. Residues lysine 106, glycine 137, and serine 139 each coordinate sn-glycerol 3-phosphate. Residue alanine 141 participates in NADPH binding. Sn-glycerol 3-phosphate contacts are provided by lysine 192, aspartate 245, serine 255, arginine 256, and asparagine 257. The active-site Proton acceptor is lysine 192. Residue arginine 256 participates in NADPH binding. Residues valine 280 and glutamate 282 each contribute to the NADPH site.

Belongs to the NAD-dependent glycerol-3-phosphate dehydrogenase family.

The protein resides in the cytoplasm. It catalyses the reaction sn-glycerol 3-phosphate + NAD(+) = dihydroxyacetone phosphate + NADH + H(+). The catalysed reaction is sn-glycerol 3-phosphate + NADP(+) = dihydroxyacetone phosphate + NADPH + H(+). Its pathway is membrane lipid metabolism; glycerophospholipid metabolism. In terms of biological role, catalyzes the reduction of the glycolytic intermediate dihydroxyacetone phosphate (DHAP) to sn-glycerol 3-phosphate (G3P), the key precursor for phospholipid synthesis. The polypeptide is Glycerol-3-phosphate dehydrogenase [NAD(P)+] (Chlamydia abortus (strain DSM 27085 / S26/3) (Chlamydophila abortus)).